A 664-amino-acid chain; its full sequence is MTAQSNITPESIVGDLRYLQLLSRSFPTIADASTEIINLEAILNLPKGTEHFLTDIHGEYEAFQHVLKNASGAVKRKVNEIFGNTLREAEKKELCTLIYYPEEKIQLVKAREKDLDDWYLITLNQLVKVCQNVSSKYTRSKVRKSLPAEFSYIIQELLHETSVEPNKHAYINVIISTIISTKRADDFIIAMCNLIQRLTIDSLHIVGDIYDRGPGAHIIMDTLCNYHNFDIQWGNHDILWMGAASGNDSCIANVIRMSMRYGNLGTLEDGYGINLLPLATFAMDTYADDPCTIFMPKMNFADTNYNEKTLRLITQMHKAITIIQFKLEAEIIDRRPEFGMSNRKLLEKIDFERGVFVYEGKEYALRDTNFPTVDPADPYRLTDEERELVEKIHYSFMNSEKLKKHMRCLFTYGGMYLVSNSNLLYHASVPLNEDGSFKHVKIRGKEYWGRKLLDKADQLIRTAYFDEEGEDDKEFAMDYIWYMWCGPEAPLFDKDKMATFERYFLEDKEIQKEKKGYYYTLRNREDICDQILDEFGALGPHSHIINGHVPVKTIQGEQPMKANGKLFVIDGGFSKAYQPETGIAGYTLVYHSHGMQLVQHEPFQSRQKAIEEGLDIKSTNFVLEFNSQRMMVKDTDKGKELVTQIQDLKKLLVAYRIGLIKEKV.

The protein belongs to the FBPase class 3 family. The cofactor is Mn(2+).

It catalyses the reaction beta-D-fructose 1,6-bisphosphate + H2O = beta-D-fructose 6-phosphate + phosphate. The protein operates within carbohydrate biosynthesis; gluconeogenesis. This is Fructose-1,6-bisphosphatase class 3 from Bacteroides thetaiotaomicron (strain ATCC 29148 / DSM 2079 / JCM 5827 / CCUG 10774 / NCTC 10582 / VPI-5482 / E50).